Here is a 1110-residue protein sequence, read N- to C-terminus: Envelopment polyprotein (1110 aa).

Positions 1–8 are excised as a propeptide; sequence MALKETDA. Over 1–290 the chain is Lumenal; that stretch reads MALKETDAKI…KYSKNIYKQT (290 aa). The short motif at 14 to 16 is the Cell attachment site element; it reads RGD. N-linked (GlcNAc...) asparagine; by host glycans are attached at residues Asn-46 and Asn-92. Disulfide bonds link Cys-90–Cys-121 and Cys-98–Cys-132. The non-covalent dimerization stretch occupies residues 153-171; that stretch reads IDNKRKLSIGTKFYIIESL. Residue Asn-186 is glycosylated (N-linked (GlcNAc...) asparagine; by host). Cys-200 and Cys-261 are joined by a disulfide. Residues 291–342 form a helical membrane-spanning segment; it reads ACINFSWFRLIMIALIVYFPIRYLVNKTSKTLFYGYDLLGLITYPILLLINY. Topologically, residues 343-459 are cytoplasmic; that stretch reads LWSYFPLKCK…VPGCDRFVTN (117 aa). Residues 460-1044 lie on the Lumenal side of the membrane; it reads RYDKCPEKDQ…HFGSFFDTVR (585 aa). N-linked (GlcNAc...) asparagine; by host glycosylation is found at Asn-566, Asn-582, and Asn-957. Residues 1045–1065 traverse the membrane as a helical segment; sequence VVLLILFVFALAYLCSIVATM. The Cytoplasmic portion of the chain corresponds to 1066–1110; it reads CRGYVRNKSYKTKYIEDTNDYSLVSTSSGKDTITRRRPPLDFSGI. The disordered stretch occupies residues 1091-1110; the sequence is TSSGKDTITRRRPPLDFSGI.

Belongs to the tospovirus envelope glycoprotein family. As to quaternary structure, homodimer; disulfide-linked. Heterodimer with Glycoprotein C. Interacts with nucleoprotein. Heterodimer with Glycoprotein N. Interacts with nucleoprotein. Post-translationally, specific enzymatic cleavages in vivo yield mature proteins including Glycoprotein N and Glycoprotein C. Glycosylated with O-linked glycans. Glycosylation is essential for proper subcellular location. In terms of processing, cleaved at acidic pH.

It localises to the virion membrane. The protein resides in the host Golgi apparatus membrane. It is found in the host endoplasmic reticulum membrane. Forms the spikes present at the surface of the virion together with Glycoprotein C. They are able to attach the virion to a cell receptor and to promote fusion of membranes after endocytosis of the virion. Plays a role in virus binding and/or entry into the vector midgut. Functionally, forms the spikes present at the surface of the virion together with Glycoprotein N. They are able to attach the virion to a cell receptor and to promote fusion of membranes after endocytosis of the virion. Probable class II fusion protein. This Impatiens necrotic spot virus (INSV) protein is Envelopment polyprotein (GP).